We begin with the raw amino-acid sequence, 160 residues long: SsrA-binding protein (160 aa).

The segment at 133-160 (KKLHDKRETEKERDWNRQKSRLLKGNSQ) is disordered. The span at 137 to 149 (DKRETEKERDWNR) shows a compositional bias: basic and acidic residues.

The protein belongs to the SmpB family.

It localises to the cytoplasm. In terms of biological role, required for rescue of stalled ribosomes mediated by trans-translation. Binds to transfer-messenger RNA (tmRNA), required for stable association of tmRNA with ribosomes. tmRNA and SmpB together mimic tRNA shape, replacing the anticodon stem-loop with SmpB. tmRNA is encoded by the ssrA gene; the 2 termini fold to resemble tRNA(Ala) and it encodes a 'tag peptide', a short internal open reading frame. During trans-translation Ala-aminoacylated tmRNA acts like a tRNA, entering the A-site of stalled ribosomes, displacing the stalled mRNA. The ribosome then switches to translate the ORF on the tmRNA; the nascent peptide is terminated with the 'tag peptide' encoded by the tmRNA and targeted for degradation. The ribosome is freed to recommence translation, which seems to be the essential function of trans-translation. The sequence is that of SsrA-binding protein from Agrobacterium fabrum (strain C58 / ATCC 33970) (Agrobacterium tumefaciens (strain C58)).